We begin with the raw amino-acid sequence, 425 residues long: Glutamate-1-semialdehyde 2,1-aminomutase (425 aa).

Position 265 is an N6-(pyridoxal phosphate)lysine (K265).

The protein belongs to the class-III pyridoxal-phosphate-dependent aminotransferase family. HemL subfamily. In terms of assembly, homodimer. Pyridoxal 5'-phosphate is required as a cofactor.

It localises to the cytoplasm. The enzyme catalyses (S)-4-amino-5-oxopentanoate = 5-aminolevulinate. It participates in porphyrin-containing compound metabolism; protoporphyrin-IX biosynthesis; 5-aminolevulinate from L-glutamyl-tRNA(Glu): step 2/2. The sequence is that of Glutamate-1-semialdehyde 2,1-aminomutase from Nitrosospira multiformis (strain ATCC 25196 / NCIMB 11849 / C 71).